Consider the following 136-residue polypeptide: Small ribosomal subunit protein uS19 (136 aa).

The tract at residues 114–136 (RSRVSHGSAGVGATRSSKFVPLK) is disordered.

It belongs to the universal ribosomal protein uS19 family.

In terms of biological role, protein S19 forms a complex with S13 that binds strongly to the 16S ribosomal RNA. The chain is Small ribosomal subunit protein uS19 from Methanosarcina barkeri (strain Fusaro / DSM 804).